Reading from the N-terminus, the 341-residue chain is Basic membrane protein B (341 aa).

Residues 1–14 (MRIVIFIFGILLTS) form the signal peptide. Cysteine 15 carries the N-palmitoyl cysteine lipid modification. Residue cysteine 15 is the site of S-diacylglycerol cysteine attachment.

It belongs to the BMP lipoprotein family. As to quaternary structure, monomer.

The protein resides in the cell inner membrane. Functionally, may be part of an ABC-type nucleoside uptake system involved in the purine salvage pathway. The polypeptide is Basic membrane protein B (bmpB) (Borreliella burgdorferi (strain ATCC 35210 / DSM 4680 / CIP 102532 / B31) (Borrelia burgdorferi)).